The primary structure comprises 247 residues: Ice-binding protein (247 aa).

An N-terminal signal peptide occupies residues 1 to 19 (MTFSILSIFVFGLISSSVA). Asn-219 is a glycosylation site (N-linked (GlcNAc...) asparagine).

Belongs to the ice-binding protein family.

Its subcellular location is the secreted. Its function is as follows. Binds ice crystals and most probably inhibits their growth in order to prevent cell damage from extracellular ice. This is Ice-binding protein from Flammulina populicola (Enokitake mushroom).